The chain runs to 229 residues: Large ribosomal subunit protein uL1 (229 aa).

The protein belongs to the universal ribosomal protein uL1 family. In terms of assembly, part of the 50S ribosomal subunit.

Its function is as follows. Binds directly to 23S rRNA. The L1 stalk is quite mobile in the ribosome, and is involved in E site tRNA release. Protein L1 is also a translational repressor protein, it controls the translation of the L11 operon by binding to its mRNA. This chain is Large ribosomal subunit protein uL1, found in Streptococcus pneumoniae serotype 2 (strain D39 / NCTC 7466).